Reading from the N-terminus, the 414-residue chain is Voltage-gated ClC-type chloride channel ClcB (414 aa).

The next 11 helical transmembrane spans lie at 5–25 (LVISIMLGMVSALIVWLFHQA), 54–74 (ALTPALGGLAAGLLLWAYQRY), 116–136 (SAIGREGAMVLLAALFASVFA), 147–167 (LWVACGAAAGMASAYHAPLAG), 169–189 (LFIAEILFGTLMLASLGPVVI), 220–240 (VQYFLMALLGLMAGFSGPLFL), 255–275 (LLPPLQLALGGIIVGLLSLIF), 292–312 (TPPGVLLIGGILICKLLAVLA), 327–347 (LFVGAALGMLCGQIFSLWPVL), 353–373 (LLMALTGMATLLAATTHAPIM), and 381–401 (MTGEYTLLPGLLLSCVIATTI).

This sequence belongs to the chloride channel (TC 2.A.49) family. ClcB subfamily.

Its subcellular location is the cell inner membrane. Probably acts as an electrical shunt for an outwardly-directed proton pump that is linked to amino acid decarboxylation, as part of the extreme acid resistance (XAR) response. In Yersinia pseudotuberculosis serotype O:1b (strain IP 31758), this protein is Voltage-gated ClC-type chloride channel ClcB.